We begin with the raw amino-acid sequence, 113 residues long: Protein Asterix (113 aa).

A helical transmembrane segment spans residues I81–L97.

The protein belongs to the Asterix family.

It localises to the membrane. This chain is Protein Asterix, found in Caenorhabditis elegans.